The primary structure comprises 167 residues: Male-specific protein scotti (167 aa).

Residues Asn-30, Asn-124, and Asn-148 are each glycosylated (N-linked (GlcNAc...) asparagine).

It belongs to the male-specific scotti family.

Its function is as follows. Post-meiotically transcribed gene that has a role in late spermiogenesis; required for actin cone progression during spermatid individualization. The chain is Male-specific protein scotti from Drosophila ananassae (Fruit fly).